Consider the following 101-residue polypeptide: Small ribosomal subunit protein uS14 (101 aa).

It belongs to the universal ribosomal protein uS14 family. Part of the 30S ribosomal subunit. Contacts proteins S3 and S10.

Functionally, binds 16S rRNA, required for the assembly of 30S particles and may also be responsible for determining the conformation of the 16S rRNA at the A site. The protein is Small ribosomal subunit protein uS14 of Pseudomonas syringae pv. tomato (strain ATCC BAA-871 / DC3000).